The sequence spans 147 residues: Antiholin-like protein LrgA (147 aa).

Helical transmembrane passes span 12–32 (PAHFFHQVIVIALVLFVSKII), 35–55 (FMPIPMPASVIGLVLLFVLLC), 74–94 (NIGLLFVPAGISVVNSLGVIS), and 98–118 (FLIIGLIIVSTILLLICTGYV).

It belongs to the CidA/LrgA family. LrgA subfamily.

It localises to the cell membrane. Inhibits the expression or activity of extracellular murein hydrolases by interacting, possibly with LrgB, with the holin-like proteins CidA and/or CidB. The LrgAB and CidAB proteins may affect the proton motive force of the membrane. May be involved in programmed cell death (PCD), possibly triggering PCD in response to antibiotics and environmental stresses. The sequence is that of Antiholin-like protein LrgA from Staphylococcus aureus (strain USA300).